A 173-amino-acid chain; its full sequence is Alpha-crystallin A chain (173 aa).

An N-acetylmethionine modification is found at Met1. The interval 1–63 is required for complex formation with BFSP1 and BFSP2; the sequence is MDVTIQHPWF…RTVLDSGVSE (63 aa). Gln6 carries the deamidated glutamine; partial modification. Residue Ser45 is modified to Phosphoserine. A Deamidated glutamine; partial modification is found at Gln50. The sHSP domain maps to 52–162; it reads LFRTVLDSGV…GHSERAIPVS (111 aa). At Lys70 the chain carries N6-acetyllysine. Residue Gln90 is modified to Deamidated glutamine; partial. Lys99 carries the post-translational modification N6-acetyllysine. His100 is a Zn(2+) binding site. Asn101 bears the Deamidated asparagine; partial mark. Glu102 and His107 together coordinate Zn(2+). Ser122 is subject to Phosphoserine. Residue Asn123 is modified to Deamidated asparagine; partial. The disordered stretch occupies residues 145–173; that stretch reads KVQSGLDAGHSERAIPVSREEKPSSAPSS. The residue at position 147 (Gln147) is a Deamidated glutamine; partial. The segment covering 153–167 has biased composition (basic and acidic residues); sequence GHSERAIPVSREEKP. His154 serves as a coordination point for Zn(2+). A glycan (O-linked (GlcNAc) serine) is linked at Ser162.

This sequence belongs to the small heat shock protein (HSP20) family. In terms of assembly, heteromer composed of three CRYAA and one CRYAB subunits. Inter-subunit bridging via zinc ions enhances stability, which is crucial as there is no protein turn over in the lens. Can also form homodimers and homotetramers (dimers of dimers) which serve as the building blocks of homooligomers. Within homooligomers, the zinc-binding motif is created from residues of 3 different molecules. His-100 and Glu-102 from one molecule are ligands of the zinc ion, and His-107 and His-154 residues from additional molecules complete the site with tetrahedral coordination geometry. Part of a complex required for lens intermediate filament formation composed of BFSP1, BFSP2 and CRYAA. In terms of processing, acetylation at Lys-70 may increase chaperone activity. Post-translationally, undergoes age-dependent proteolytical cleavage at the C-terminus.

Its subcellular location is the cytoplasm. It localises to the nucleus. Functionally, contributes to the transparency and refractive index of the lens. Acts as a chaperone, preventing aggregation of various proteins under a wide range of stress conditions. Required for the correct formation of lens intermediate filaments as part of a complex composed of BFSP1, BFSP2 and CRYAA. The protein is Alpha-crystallin A chain (CRYAA) of Eulemur fulvus fulvus (Brown lemur).